Reading from the N-terminus, the 340-residue chain is MEF2 transcription factor homolog (340 aa).

An MADS-box domain is found at 1 to 61 (MGRKKIQITR…NKLFQYASTD (61 aa)). Disordered regions lie at residues 90-112 (RKEGNQGGGNSDDESPGPSTSPV), 193-217 (NQRNDPLSSTSVAPSSSSSKHLDFP), 258-283 (LQQRPVSQPAPSISNSSTNGISNGTS), and 312-340 (PNTYVKMEPHSPPEKRPRITTEWRPQQLT). A compositionally biased stretch (low complexity) spans 200-211 (SSTSVAPSSSSS). A compositionally biased stretch (polar residues) spans 258–268 (LQQRPVSQPAP). Residues 269-283 (SISNSSTNGISNGTS) are compositionally biased toward low complexity. A compositionally biased stretch (basic and acidic residues) spans 318–332 (MEPHSPPEKRPRITT).

It belongs to the MEF2 family. Interacts with histone deacetylase hda-4 isoform b.

It localises to the nucleus. In terms of biological role, transcription regulator. Binds specifically to the MEF2 element, 5'-[TC]TA[AT][AT][AT][AT]TA[AG]-3' in the regulatory elements of target genes, such as chemoreceptors str-1 and srh-234. Involved in transduction of sensory signals, together with egl-4, kin-29 and hda-4; binding to histone deacetylase hda-4 enables negative modulation of chemoreceptor gene expression in chemosensory neurons. In response to starvation, negatively modulates expression of chemoreceptor srh-234 in ADL sensory neurons, acting in concert with basic helix-loop-helix (bHLH) transcription factors. Plays a role in regulating muscle sensitivity to acetylcholine (ACh) and the magnitude of presynaptic ACh release via a retrograde signal, perhaps by indirectly decreasing Ras-related protein Rab-3 activity. This is MEF2 transcription factor homolog from Caenorhabditis elegans.